The following is a 211-amino-acid chain: Thiamine-phosphate synthase (211 aa).

4-amino-2-methyl-5-(diphosphooxymethyl)pyrimidine is bound by residues 37–41 (QLRIK) and Asn-69. Mg(2+) contacts are provided by Asp-70 and Asp-89. Ser-108 contacts 4-amino-2-methyl-5-(diphosphooxymethyl)pyrimidine. A 2-[(2R,5Z)-2-carboxy-4-methylthiazol-5(2H)-ylidene]ethyl phosphate-binding site is contributed by 134–136 (TQT). Lys-137 provides a ligand contact to 4-amino-2-methyl-5-(diphosphooxymethyl)pyrimidine. 2-[(2R,5Z)-2-carboxy-4-methylthiazol-5(2H)-ylidene]ethyl phosphate-binding positions include Gly-166 and 186-187 (IS).

It belongs to the thiamine-phosphate synthase family. Requires Mg(2+) as cofactor.

The enzyme catalyses 2-[(2R,5Z)-2-carboxy-4-methylthiazol-5(2H)-ylidene]ethyl phosphate + 4-amino-2-methyl-5-(diphosphooxymethyl)pyrimidine + 2 H(+) = thiamine phosphate + CO2 + diphosphate. It carries out the reaction 2-(2-carboxy-4-methylthiazol-5-yl)ethyl phosphate + 4-amino-2-methyl-5-(diphosphooxymethyl)pyrimidine + 2 H(+) = thiamine phosphate + CO2 + diphosphate. It catalyses the reaction 4-methyl-5-(2-phosphooxyethyl)-thiazole + 4-amino-2-methyl-5-(diphosphooxymethyl)pyrimidine + H(+) = thiamine phosphate + diphosphate. It participates in cofactor biosynthesis; thiamine diphosphate biosynthesis; thiamine phosphate from 4-amino-2-methyl-5-diphosphomethylpyrimidine and 4-methyl-5-(2-phosphoethyl)-thiazole: step 1/1. In terms of biological role, condenses 4-methyl-5-(beta-hydroxyethyl)thiazole monophosphate (THZ-P) and 2-methyl-4-amino-5-hydroxymethyl pyrimidine pyrophosphate (HMP-PP) to form thiamine monophosphate (TMP). This Shigella boydii serotype 4 (strain Sb227) protein is Thiamine-phosphate synthase.